Here is a 237-residue protein sequence, read N- to C-terminus: MVLQYPQNKILVLSDHPHNFSKTQFLQDLFHCSSTGISIVKDQTWENRYYKVHFDLYIDSCKDIPVWVEEFITPECEPLRNVMAGIILITDIRQTKPQELLHQFMIAAHRNTFVVLVNVNEEVEQDEIDELNEIWSNAFTNVIELVNWKRSKPTVNHNDYGEKLGLDRIQEIIDTHDWLNCEVLPATKIREEIPNEMPLEQIIRNLQSARLKYKSIENSSEADAFANEMADELSRYL.

This sequence belongs to the IRC6 family.

Its function is as follows. Involved in gross chromosomal rearrangements (GCRs) and telomere healing. This Saccharomyces cerevisiae (strain AWRI1631) (Baker's yeast) protein is Increased recombination centers protein 6 (IRC6).